Here is a 144-residue protein sequence, read N- to C-terminus: MSKKQEVKYYGSSAGKDQLVYGVVHIYASFNDTFVHVTDMSGRETFCKVTGGMKVKADRDESSPYAAMMAAQDVVARCKECGINALHVKMRATGGVGTKSPGPGAQAALRALARAGMKIGRIEDVTPVPTDSTRRKGSRRGRRL.

Residues 123–144 (EDVTPVPTDSTRRKGSRRGRRL) form a disordered region. Residues 135-144 (RKGSRRGRRL) show a composition bias toward basic residues.

This sequence belongs to the universal ribosomal protein uS11 family.

The polypeptide is Small ribosomal subunit protein uS11 (RPS14) (Trypanosoma brucei brucei).